A 417-amino-acid polypeptide reads, in one-letter code: Histidine--tRNA ligase (417 aa).

The protein belongs to the class-II aminoacyl-tRNA synthetase family. As to quaternary structure, homodimer.

It is found in the cytoplasm. The enzyme catalyses tRNA(His) + L-histidine + ATP = L-histidyl-tRNA(His) + AMP + diphosphate + H(+). This Nitratidesulfovibrio vulgaris (strain DP4) (Desulfovibrio vulgaris) protein is Histidine--tRNA ligase.